The chain runs to 298 residues: Ornithine carbamoyltransferase (298 aa).

Residues 50–53 (STRT), glutamine 77, arginine 101, and 128–131 (HPCQ) contribute to the carbamoyl phosphate site. Residues asparagine 159, aspartate 216, and 220–221 (SM) each bind L-ornithine. Residues 256-257 (CL) and arginine 284 each bind carbamoyl phosphate.

Belongs to the aspartate/ornithine carbamoyltransferase superfamily. OTCase family.

Its subcellular location is the cytoplasm. The enzyme catalyses carbamoyl phosphate + L-ornithine = L-citrulline + phosphate + H(+). The protein operates within amino-acid biosynthesis; L-arginine biosynthesis; L-arginine from L-ornithine and carbamoyl phosphate: step 1/3. In terms of biological role, reversibly catalyzes the transfer of the carbamoyl group from carbamoyl phosphate (CP) to the N(epsilon) atom of ornithine (ORN) to produce L-citrulline. This chain is Ornithine carbamoyltransferase, found in Methylococcus capsulatus (strain ATCC 33009 / NCIMB 11132 / Bath).